The following is a 352-amino-acid chain: Sphingosine 1-phosphate receptor 2 (352 aa).

Over 1–34 the chain is Extracellular; it reads MGGLYSEYLNPEKVQEHYNYTKETLDMQETPSRK. N-linked (GlcNAc...) asparagine glycosylation is present at N19. A helical transmembrane segment spans residues 35-59; the sequence is VASAFIIILCCAIVVENLLVLIAVA. At 60 to 66 the chain is on the cytoplasmic side; sequence RNSKFHS. Residues 67–95 form a helical membrane-spanning segment; it reads AMYLFLGNLAASDLLAGVAFVANTLLSGP. Over 96–109 the chain is Extracellular; the sequence is VTLSLTPLQWFARE. Residues 110 to 128 form a helical membrane-spanning segment; the sequence is GSAFITLSASVFSLLAIAI. Over 129-147 the chain is Cytoplasmic; sequence ERQVAIAKVKLYGSDKSCR. Residues 148-173 traverse the membrane as a helical segment; sequence MLMLIGASWLISLILGGLPILGWNCL. Residues 174 to 189 are Extracellular-facing; it reads DHLEACSTVLPLYAKH. The chain crosses the membrane as a helical span at residues 190–210; it reads YVLCVVTIFSVILLAIVALYV. Residues 211–233 lie on the Cytoplasmic side of the membrane; the sequence is RIYFVVRSSHADVAGPQTLALLK. Residues 234–255 form a helical membrane-spanning segment; the sequence is TVTIVLGVFIICWLPAFSILLL. Residues 256-271 lie on the Extracellular side of the membrane; that stretch reads DSTCPVRACPVLYKAH. A helical transmembrane segment spans residues 272–292; that stretch reads YFFAFATLNSLLNPVIYTWRS. The Cytoplasmic portion of the chain corresponds to 293–352; sequence RDLRREVLRPLLCWRQGKGATGRRGGNPGHRLLPLRSSSSLERGLHMPTSPTFLEGNTVV. C305 is lipidated: S-palmitoyl cysteine.

This sequence belongs to the G-protein coupled receptor 1 family. As to expression, expressed in all developing tissues with highest levels detected in primitive, transformed cells. Relative abundance: lung &gt; kidney = skin = gut &gt; spleen &gt; brain &gt; liver.

Its subcellular location is the cell membrane. Functionally, receptor for the lysosphingolipid sphingosine 1-phosphate (S1P). S1P is a bioactive lysophospholipid that elicits diverse physiological effects on most types of cells and tissues. Receptor for the chemokine-like protein FAM19A5. Mediates the inhibitory effect of FAM19A5 on vascular smooth muscle cell proliferation and migration. In lymphoid follicles, couples the binding of S1P to the activation of GNA13 and downstream inhibition of AKT activation leading to suppression of germinal center (GC) B cell growth and migration outside the GC niche. The chain is Sphingosine 1-phosphate receptor 2 (S1pr2) from Rattus norvegicus (Rat).